Reading from the N-terminus, the 279-residue chain is Phycobilisome 34.5 kDa linker polypeptide, phycoerythrocyanin-associated, rod (279 aa).

A PBS-linker domain is found at 2–178 (STSVAERLAI…LYRGRANSDN (177 aa)). The CpcD-like domain occupies 226–278 (ARMFIVEAIAGTLNTNVAVRRSRQVYTVPYDRLSATYQEIHKRGGKIVKITPA).

The protein belongs to the phycobilisome linker protein family.

The protein localises to the cellular thylakoid membrane. In terms of biological role, rod linker protein, associated with phycoerythrocyanin. Linker polypeptides determine the state of aggregation and the location of the disk-shaped phycobiliprotein units within the phycobilisome and modulate their spectroscopic properties in order to mediate a directed and optimal energy transfer. The sequence is that of Phycobilisome 34.5 kDa linker polypeptide, phycoerythrocyanin-associated, rod (pecC) from Mastigocladus laminosus (Fischerella sp.).